The chain runs to 270 residues: Putative phosphoenolpyruvate synthase regulatory protein (270 aa).

150–157 contacts ADP; sequence GVSRCGKT.

It belongs to the pyruvate, phosphate/water dikinase regulatory protein family. PSRP subfamily.

It carries out the reaction [pyruvate, water dikinase] + ADP = [pyruvate, water dikinase]-phosphate + AMP + H(+). The catalysed reaction is [pyruvate, water dikinase]-phosphate + phosphate + H(+) = [pyruvate, water dikinase] + diphosphate. In terms of biological role, bifunctional serine/threonine kinase and phosphorylase involved in the regulation of the phosphoenolpyruvate synthase (PEPS) by catalyzing its phosphorylation/dephosphorylation. This chain is Putative phosphoenolpyruvate synthase regulatory protein, found in Shewanella putrefaciens (strain CN-32 / ATCC BAA-453).